The following is a 418-amino-acid chain: Odorant receptor 13a (418 aa).

Residues 1-38 (MFYSYPYKALSFPIQCVWLKLNGSWPLTESSRPWRSQS) lie on the Cytoplasmic side of the membrane. Residues 39–59 (LLATAYIVWAWYVIASVGITI) form a helical membrane-spanning segment. The Extracellular segment spans residues 60 to 70 (SYQTAFLLNNL). A glycan (N-linked (GlcNAc...) asparagine) is linked at Asn-69. The chain crosses the membrane as a helical span at residues 71-91 (SDIIITTENCCTTFMGVLNFV). Residues 92-140 (RLIHLRLNQRKFRQLIENFSYEIWIPNSSKNNVAAECRRRMVTFSIMTS) lie on the Cytoplasmic side of the membrane. The chain crosses the membrane as a helical span at residues 141 to 161 (LLACLIIMYCVLPLVEIFFGP). Over 162–195 (AFDAQNKPFPYKMIFPYDAQSSWIRYVMTYIFTS) the chain is Extracellular. The chain crosses the membrane as a helical span at residues 196–216 (YAGICVVTTLFAEDTILGFFI). Topologically, residues 217–273 (TYTCGQFHLLHQRIAGLFAGSNAELAESIQLERLKRIVEKHNNIISFAKRLEDFFNP) are cytoplasmic. The helical transmembrane segment at 274–294 (ILLANLMISSVLICMVGFQIV) threads the bilayer. The Extracellular portion of the chain corresponds to 295–299 (TGKNM). Residues 300-320 (FIGDYVKFIIYISSALSQLYV) traverse the membrane as a helical segment. The Cytoplasmic segment spans residues 321–385 (LCENGDALIK…PVRITAFKFS (65 aa)). The helical transmembrane segment at 386–406 (TLSLQSFTAILSTSISYFTLL) threads the bilayer. Residues 407-418 (RSVYFDDEKKLD) are Extracellular-facing.

The protein belongs to the insect chemoreceptor superfamily. Heteromeric odorant receptor channel (TC 1.A.69) family. Or1a subfamily. As to quaternary structure, interacts with Orco. Complexes exist early in the endomembrane system in olfactory sensory neurons (OSNs), coupling these complexes to the conserved ciliary trafficking pathway. In terms of tissue distribution, expressed in olfactory sensory neurons in the antenna.

The protein localises to the cell membrane. Odorant receptor which mediates acceptance or avoidance behavior, depending on its substrates. The odorant receptor repertoire encodes a large collection of odor stimuli that vary widely in identity, intensity, and duration. May form a complex with Orco to form odorant-sensing units, providing sensitive and prolonged odorant signaling and calcium permeability. Involved in the behavioral responses to octanol, nonanol, and pentyl acetate. In Drosophila melanogaster (Fruit fly), this protein is Odorant receptor 13a (Or13a).